The primary structure comprises 216 residues: Transmembrane emp24 domain-containing protein eca (216 aa).

The first 20 residues, 1–20, serve as a signal peptide directing secretion; the sequence is MRDQFISLALMLCILHSACG. At 21 to 182 the chain is on the lumenal side; sequence LYFHISETER…FRHTSESTNS (162 aa). A GOLD domain is found at 30 to 126; sequence RKCFIEEVPD…QLRVHLDIQV (97 aa). A coiled-coil region spans residues 134-164; it reads ANVAQKEKLTELQLRIRQLLDQVEQITKEQN. The chain crosses the membrane as a helical span at residues 183–203; that stretch reads RVLWWSLAQTVVLVCMGFWQM. Residues 204-216 are Cytoplasmic-facing; that stretch reads RHLKSFFEAKKLV. Positions 213–216 match the Prevents secretion from ER motif; sequence KKLV.

This sequence belongs to the EMP24/GP25L family.

The protein resides in the endoplasmic reticulum membrane. Eca and bai are essential, though not redundant, for dorsoventral patterning of the embryo. Specifically required during early embryogenesis for the activity of maternal tkv, while the zygotic tkv is not affected. Involved in Golgi organization. This chain is Transmembrane emp24 domain-containing protein eca, found in Drosophila erecta (Fruit fly).